A 110-amino-acid polypeptide reads, in one-letter code: MRSKVEILPSNLIFHELIGLEIKVINSTNPSLTGIRGRVINETKNMLVVENSQSRELKIPKADSEFLFRIPAELSEKGRRSDTFVKIQGNLLLSQPENRIKNIKKLRKWG.

This sequence belongs to the eukaryotic/archaeal RNase P protein component 1 family. In terms of assembly, consists of a catalytic RNA component and at least 4-5 protein subunits.

It localises to the cytoplasm. It catalyses the reaction Endonucleolytic cleavage of RNA, removing 5'-extranucleotides from tRNA precursor.. Its function is as follows. Part of ribonuclease P, a protein complex that generates mature tRNA molecules by cleaving their 5'-ends. This Methanosarcina acetivorans (strain ATCC 35395 / DSM 2834 / JCM 12185 / C2A) protein is Ribonuclease P protein component 1.